The chain runs to 277 residues: Putative pyruvate, phosphate dikinase regulatory protein (277 aa).

An ADP-binding site is contributed by 151-158; the sequence is GISRTSKT.

The protein belongs to the pyruvate, phosphate/water dikinase regulatory protein family. PDRP subfamily.

The catalysed reaction is N(tele)-phospho-L-histidyl/L-threonyl-[pyruvate, phosphate dikinase] + ADP = N(tele)-phospho-L-histidyl/O-phospho-L-threonyl-[pyruvate, phosphate dikinase] + AMP + H(+). The enzyme catalyses N(tele)-phospho-L-histidyl/O-phospho-L-threonyl-[pyruvate, phosphate dikinase] + phosphate + H(+) = N(tele)-phospho-L-histidyl/L-threonyl-[pyruvate, phosphate dikinase] + diphosphate. In terms of biological role, bifunctional serine/threonine kinase and phosphorylase involved in the regulation of the pyruvate, phosphate dikinase (PPDK) by catalyzing its phosphorylation/dephosphorylation. The protein is Putative pyruvate, phosphate dikinase regulatory protein of Alkaliphilus metalliredigens (strain QYMF).